Consider the following 259-residue polypeptide: Protein-L-isoaspartate O-methyltransferase (259 aa).

The interval 1–25 (MRKRVDPPAGGRLAPGITPANSNTR) is disordered. Ser-107 is an active-site residue.

It belongs to the methyltransferase superfamily. L-isoaspartyl/D-aspartyl protein methyltransferase family.

The protein localises to the cytoplasm. The enzyme catalyses [protein]-L-isoaspartate + S-adenosyl-L-methionine = [protein]-L-isoaspartate alpha-methyl ester + S-adenosyl-L-homocysteine. Catalyzes the methyl esterification of L-isoaspartyl residues in peptides and proteins that result from spontaneous decomposition of normal L-aspartyl and L-asparaginyl residues. It plays a role in the repair and/or degradation of damaged proteins. In Bordetella bronchiseptica (strain ATCC BAA-588 / NCTC 13252 / RB50) (Alcaligenes bronchisepticus), this protein is Protein-L-isoaspartate O-methyltransferase.